Consider the following 849-residue polypeptide: Serine/threonine-protein phosphatase 4 regulatory subunit 3B (849 aa).

The region spanning 1–100 (MSDTRRRVKV…DEIWEKICQV (100 aa)) is the WH1 domain. Phosphoserine is present on residues S117 and S695. Acidic residues predominate over residues 714-724 (EMWFNEDEEEE). Residues 714–849 (EMWFNEDEEE…SPRKRPRLGS (136 aa)) are disordered. Basic and acidic residues predominate over residues 733 to 764 (EKPKPEDDFPDNYEKFMETKKAKESEDKENLP). Polar residues predominate over residues 776-818 (FSHSASAANGTNSKSVVAQIPPATSNGSSSKTTNLPTSVTATK). A compositionally biased stretch (acidic residues) spans 827–838 (YPDDEEEDEEEE). S840 carries the post-translational modification Phosphoserine.

The protein belongs to the SMEK family. As to quaternary structure, serine/threonine-protein phosphatase 4 (PP4) occurs in different assemblies of the catalytic and one or more regulatory subunits. Component of the PP4 complex PPP4C-PPP4R2-PPP4R3B. In terms of tissue distribution, moderately expressed in tissues and specific brain regions examined.

The protein resides in the cytoplasm. Its subcellular location is the cytoskeleton. The protein localises to the microtubule organizing center. It is found in the centrosome. It localises to the nucleus. Regulatory subunit of serine/threonine-protein phosphatase 4 (PP4). May regulate the activity of PPP4C at centrosomal microtubule organizing centers. This chain is Serine/threonine-protein phosphatase 4 regulatory subunit 3B, found in Homo sapiens (Human).